Here is a 540-residue protein sequence, read N- to C-terminus: MANPTSMSSAVHVYRRFVPQPVRSAAATTVPAGVRRKVKGGLARTLSRREARLHRRALRRVRRAGLGQSERRTTAPDGRIAHVHTGLTVDLARRLDHDLVTHALDAAEVPWFAVPALDDRRLCLAVEVRDKGTVRRVLRALLEEHTGYVVSVSPSAADTRETPGSHIKAWKHYGRARVIRLTWLRTDPTEGLWVGEDQGIEIEFWTANTDLPHERLIGPRPNRVQRAVPAEALGIEIGLDRLSGYCDIDGDLGPTVTLENFDVVRLEEISFPVDAVLLWQHPTPWGEELLRAALRSVHQYAPWIDVVHVVAQAEPPAWLEADERISVVRAVPGAEWRLDQLPDLAEHFLLMRPGALLGRPVRPFDYFTPGGGTRPRRGPWNASESFAEWVRAAYSVTGRATGHGYAAGPQPYRADTLTRLGEAGARSLPVPDEQVLSGVPGTHPMDGMAHHFGYVAGHADPSGEASVALHAALPGIGTHLQRLLVRRDVQQLQFFGLGTGEAGSGGGTNAVVRFLHQYYPVPSVFECDRPQTDTEPDRHS.

The protein belongs to the stealth family.

In Streptomyces coelicolor (strain ATCC BAA-471 / A3(2) / M145), this protein is Exopolysaccharide phosphotransferase SCO6022.